The following is a 358-amino-acid chain: Protein-glutamate methylesterase/protein-glutamine glutaminase (358 aa).

In terms of domain architecture, Response regulatory spans 5 to 122; sequence SVLIIDDSAL…RNSLEAYTDE (118 aa). Position 56 is a 4-aspartylphosphate (D56). A CheB-type methylesterase domain is found at 159-351; that stretch reads GISTEKLIII…RRILARLVGA (193 aa). Catalysis depends on residues S171, H197, and D293.

It belongs to the CheB family. Post-translationally, phosphorylated by CheA. Phosphorylation of the N-terminal regulatory domain activates the methylesterase activity.

It localises to the cytoplasm. The enzyme catalyses [protein]-L-glutamate 5-O-methyl ester + H2O = L-glutamyl-[protein] + methanol + H(+). It carries out the reaction L-glutaminyl-[protein] + H2O = L-glutamyl-[protein] + NH4(+). In terms of biological role, involved in chemotaxis. Part of a chemotaxis signal transduction system that modulates chemotaxis in response to various stimuli. Catalyzes the demethylation of specific methylglutamate residues introduced into the chemoreceptors (methyl-accepting chemotaxis proteins or MCP) by CheR. Also mediates the irreversible deamidation of specific glutamine residues to glutamic acid. This Nitrosomonas europaea (strain ATCC 19718 / CIP 103999 / KCTC 2705 / NBRC 14298) protein is Protein-glutamate methylesterase/protein-glutamine glutaminase.